Consider the following 199-residue polypeptide: Adenylyl-sulfate kinase (199 aa).

34–41 serves as a coordination point for ATP; sequence GLSGSGKS. Residue serine 108 is the Phosphoserine intermediate of the active site.

This sequence belongs to the APS kinase family.

It carries out the reaction adenosine 5'-phosphosulfate + ATP = 3'-phosphoadenylyl sulfate + ADP + H(+). Its pathway is sulfur metabolism; hydrogen sulfide biosynthesis; sulfite from sulfate: step 2/3. Functionally, catalyzes the synthesis of activated sulfate. This is Adenylyl-sulfate kinase from Staphylococcus carnosus (strain TM300).